The primary structure comprises 412 residues: NADH-ubiquinone oxidoreductase 49 kDa subunit (412 aa).

Belongs to the complex I 49 kDa subunit family.

The protein localises to the hydrogenosome. The enzyme catalyses a ubiquinone + NADH + 5 H(+)(in) = a ubiquinol + NAD(+) + 4 H(+)(out). Functionally, transfer of electrons from NADH to the respiratory chain. The immediate electron acceptor for the enzyme is believed to be ubiquinone. Component of the iron-sulfur (IP) fragment of the enzyme. The polypeptide is NADH-ubiquinone oxidoreductase 49 kDa subunit (nad7) (Nyctotherus ovalis).